Here is a 255-residue protein sequence, read N- to C-terminus: 5'-nucleotidase SurE (255 aa).

Positions 8, 9, 39, and 91 each coordinate a divalent metal cation.

This sequence belongs to the SurE nucleotidase family. Requires a divalent metal cation as cofactor.

Its subcellular location is the cytoplasm. It carries out the reaction a ribonucleoside 5'-phosphate + H2O = a ribonucleoside + phosphate. Its function is as follows. Nucleotidase that shows phosphatase activity on nucleoside 5'-monophosphates. The protein is 5'-nucleotidase SurE of Acinetobacter baumannii (strain SDF).